A 491-amino-acid chain; its full sequence is Protein nucleotidyltransferase YdiU (491 aa).

ATP contacts are provided by Gly94, Gly96, Arg97, Lys117, Asp129, Gly130, Arg180, and Arg187. Asp256 acts as the Proton acceptor in catalysis. Residues Asn257 and Asp266 each contribute to the Mg(2+) site. Asp266 contacts ATP.

The protein belongs to the SELO family. Mg(2+) serves as cofactor. It depends on Mn(2+) as a cofactor.

It catalyses the reaction L-seryl-[protein] + ATP = 3-O-(5'-adenylyl)-L-seryl-[protein] + diphosphate. It carries out the reaction L-threonyl-[protein] + ATP = 3-O-(5'-adenylyl)-L-threonyl-[protein] + diphosphate. The catalysed reaction is L-tyrosyl-[protein] + ATP = O-(5'-adenylyl)-L-tyrosyl-[protein] + diphosphate. The enzyme catalyses L-histidyl-[protein] + UTP = N(tele)-(5'-uridylyl)-L-histidyl-[protein] + diphosphate. It catalyses the reaction L-seryl-[protein] + UTP = O-(5'-uridylyl)-L-seryl-[protein] + diphosphate. It carries out the reaction L-tyrosyl-[protein] + UTP = O-(5'-uridylyl)-L-tyrosyl-[protein] + diphosphate. In terms of biological role, nucleotidyltransferase involved in the post-translational modification of proteins. It can catalyze the addition of adenosine monophosphate (AMP) or uridine monophosphate (UMP) to a protein, resulting in modifications known as AMPylation and UMPylation. The chain is Protein nucleotidyltransferase YdiU from Clostridium botulinum (strain ATCC 19397 / Type A).